We begin with the raw amino-acid sequence, 379 residues long: Protein RecA (379 aa).

79 to 86 (GPESSGKT) is a binding site for ATP.

The protein belongs to the RecA family.

Its subcellular location is the cytoplasm. Functionally, can catalyze the hydrolysis of ATP in the presence of single-stranded DNA, the ATP-dependent uptake of single-stranded DNA by duplex DNA, and the ATP-dependent hybridization of homologous single-stranded DNAs. It interacts with LexA causing its activation and leading to its autocatalytic cleavage. The protein is Protein RecA of Streptococcus agalactiae serotype III (strain NEM316).